The chain runs to 55 residues: UPF0391 membrane protein RALTA_A0099 (55 aa).

Transmembrane regions (helical) follow at residues 5–25 (ALVF…GIAA) and 30–50 (IAKI…VMGL).

Belongs to the UPF0391 family.

The protein resides in the cell membrane. The protein is UPF0391 membrane protein RALTA_A0099 of Cupriavidus taiwanensis (strain DSM 17343 / BCRC 17206 / CCUG 44338 / CIP 107171 / LMG 19424 / R1) (Ralstonia taiwanensis (strain LMG 19424)).